The chain runs to 966 residues: Protein mes-1 (966 aa).

Residues 1–19 (MKIHHFLTLLCTFLPLTTT) form the signal peptide. Over 20–470 (ALTNSTPLSL…QASDIPTSVE (451 aa)) the chain is Extracellular. N-linked (GlcNAc...) asparagine glycosylation is found at N62, N126, N183, N214, N251, and N372. The chain crosses the membrane as a helical span at residues 471-491 (LMAVVLATSAIFALIALFLLY). Residues 492–966 (RKRKRDKKAR…FKSVNVAATV (475 aa)) are Cytoplasmic-facing. Positions 656-966 (HNFNERIEKQ…FKSVNVAATV (311 aa)) constitute a Protein kinase domain. ATP contacts are provided by residues 662–670 (IEKQAYWLM) and K685.

Belongs to the protein kinase superfamily.

It is found in the cell membrane. Functionally, during early embryogenesis, controls asymmetric cell division and the asymmetric localization of P granules of germline precursor P2 and its descendant P3. Probably upstream of tyrosine kinase src-1, plays a role in endoderm development by controlling spindle orientation during EMS blastomere cell division. Controls EMS spindle orientation probably by promoting lin-5 and gpr-1/2 enrichment at, and let-99 exclusion from the junction between P2 and EMS cells. The chain is Protein mes-1 from Caenorhabditis elegans.